Consider the following 280-residue polypeptide: Elongation factor Ts (280 aa).

The involved in Mg(2+) ion dislocation from EF-Tu stretch occupies residues 79 to 82 (TDFV).

Belongs to the EF-Ts family.

It is found in the cytoplasm. In terms of biological role, associates with the EF-Tu.GDP complex and induces the exchange of GDP to GTP. It remains bound to the aminoacyl-tRNA.EF-Tu.GTP complex up to the GTP hydrolysis stage on the ribosome. This chain is Elongation factor Ts, found in Vibrio cholerae serotype O1 (strain ATCC 39541 / Classical Ogawa 395 / O395).